Consider the following 832-residue polypeptide: Ventricular zone-expressed PH domain-containing protein homolog 1 (832 aa).

Positions Ala-201–Met-319 are interaction with TGFBR1. The disordered stretch occupies residues Asp-497–Glu-519. Residues His-499–His-510 show a composition bias toward polar residues. The tract at residues Glu-663–Leu-832 is interaction with TGFBR1. The region spanning Gln-716–Ala-818 is the PH domain.

This sequence belongs to the MELT/VEPH family. As to quaternary structure, interacts with TGFBR1.

Its subcellular location is the cell membrane. Its function is as follows. Interacts with TGF-beta receptor type-1 (TGFBR1) and inhibits dissociation of activated SMAD2 from TGFBR1, impeding its nuclear accumulation and resulting in impaired TGF-beta signaling. May also affect FOXO, Hippo and Wnt signaling. The polypeptide is Ventricular zone-expressed PH domain-containing protein homolog 1 (Veph1) (Rattus norvegicus (Rat)).